Consider the following 386-residue polypeptide: GLABROUS1 enhancer-binding protein-like 1 (386 aa).

2 disordered regions span residues 1–58 and 197–314; these read MVTP…KKKK and ESGE…DDDD. Over residues 216–226 the composition is skewed to basic and acidic residues; the sequence is EEIRDNDETAR. The stretch at 221-285 forms a coiled coil; it reads NDETARKAQQ…LKEHEEVANT (65 aa). Positions 257 to 267 are enriched in polar residues; it reads DNNGTTQIAQQ. The segment covering 291 to 300 has biased composition (low complexity); it reads NGAAKTTENG. Residues 354–375 are non-canonical leucine-zipper; the sequence is LSDEWKALCVEERRLNIKKLRF.

It belongs to the GeBP family. Homo- and heterodimers. Interacts with GEBP, GPL2 and GPL3. Interacts with GEBP. In terms of tissue distribution, expressed in the apical meristem and young leaf primordia. Detected in the vascular tissues of cotyledons and leaves, in hydathodes and at the base of flowers and siliques, but not in roots.

It is found in the nucleus. Probable transcription factor. May play redundant roles with GEBP and GPL2 in cytokinin responses by regulating the transcript levels of type-A ARR response genes. Involved in stress responses. Plays a repressive role in cell expansion by counteracting the positive role of CPR5 in this process, but does not regulate cell proliferation or endoreduplication. This Arabidopsis thaliana (Mouse-ear cress) protein is GLABROUS1 enhancer-binding protein-like 1.